Consider the following 964-residue polypeptide: Probable outer membrane protein PmpE (964 aa).

The N-terminal stretch at 1-18 (MKKAFFFFLIGNSLSGLA) is a signal peptide. Residues 683 to 964 (LTPSGHPFWG…YLNGEIALRF (282 aa)) form the Autotransporter domain.

Belongs to the PMP outer membrane protein family.

It is found in the secreted. Its subcellular location is the cell wall. It localises to the cell outer membrane. The sequence is that of Probable outer membrane protein PmpE (pmpE) from Chlamydia trachomatis serovar D (strain ATCC VR-885 / DSM 19411 / UW-3/Cx).